We begin with the raw amino-acid sequence, 410 residues long: ORC1-type DNA replication protein 4 (410 aa).

ATP is bound by residues Thr-73 to Leu-77, Tyr-220, and Arg-232.

It belongs to the CDC6/cdc18 family.

Functionally, involved in regulation of DNA replication. The chain is ORC1-type DNA replication protein 4 (orc4) from Halobacterium salinarum (strain ATCC 700922 / JCM 11081 / NRC-1) (Halobacterium halobium).